The primary structure comprises 250 residues: Glucosamine-6-phosphate deaminase (250 aa).

D67 (proton acceptor; for enolization step) is an active-site residue. The For ring-opening step role is filled by N136. Residue H138 is the Proton acceptor; for ring-opening step of the active site. E143 serves as the catalytic For ring-opening step.

The protein belongs to the glucosamine/galactosamine-6-phosphate isomerase family. NagB subfamily.

It carries out the reaction alpha-D-glucosamine 6-phosphate + H2O = beta-D-fructose 6-phosphate + NH4(+). It participates in amino-sugar metabolism; N-acetylneuraminate degradation; D-fructose 6-phosphate from N-acetylneuraminate: step 5/5. Functionally, catalyzes the reversible isomerization-deamination of glucosamine 6-phosphate (GlcN6P) to form fructose 6-phosphate (Fru6P) and ammonium ion. This is Glucosamine-6-phosphate deaminase from Oceanobacillus iheyensis (strain DSM 14371 / CIP 107618 / JCM 11309 / KCTC 3954 / HTE831).